A 213-amino-acid chain; its full sequence is Octanoyltransferase (213 aa).

One can recognise a BPL/LPL catalytic domain in the interval 32–207 (NSTLDEIWLV…NILALLNNPD (176 aa)). Substrate contacts are provided by residues 71-78 (RGGQVTYH), 138-140 (SLG), and 151-153 (GLA). Cys169 functions as the Acyl-thioester intermediate in the catalytic mechanism.

The protein belongs to the LipB family.

It is found in the cytoplasm. It catalyses the reaction octanoyl-[ACP] + L-lysyl-[protein] = N(6)-octanoyl-L-lysyl-[protein] + holo-[ACP] + H(+). The protein operates within protein modification; protein lipoylation via endogenous pathway; protein N(6)-(lipoyl)lysine from octanoyl-[acyl-carrier-protein]: step 1/2. In terms of biological role, catalyzes the transfer of endogenously produced octanoic acid from octanoyl-acyl-carrier-protein onto the lipoyl domains of lipoate-dependent enzymes. Lipoyl-ACP can also act as a substrate although octanoyl-ACP is likely to be the physiological substrate. The chain is Octanoyltransferase from Shigella flexneri serotype 5b (strain 8401).